We begin with the raw amino-acid sequence, 389 residues long: Nucleic acid dioxygenase ALKBH1 (389 aa).

A tRNA-binding region spans residues 86-389 (SKWQAYGLKG…VKRARINPDS (304 aa)). Substrate-binding positions include Trp144 and 175–177 (YHY). The Fe2OG dioxygenase domain maps to 208-347 (GFEDFRAEAG…RVNMTVRQVL (140 aa)). 220–222 (NYY) provides a ligand contact to 2-oxoglutarate. Fe cation is bound by residues His231, Asp233, and His287. Asp233 contributes to the substrate binding site. 338-344 (RVNMTVR) lines the 2-oxoglutarate pocket.

It belongs to the alkB family. Monomer. Interacts with DNAJB6. Fe(2+) is required as a cofactor. As to expression, ubiquitous.

The protein resides in the nucleus. The protein localises to the mitochondrion. The enzyme catalyses 2'-deoxyribonucleotide-(2'-deoxyribose 5'-phosphate)-2'-deoxyribonucleotide-DNA = a 3'-end 2'-deoxyribonucleotide-(2,3-dehydro-2,3-deoxyribose 5'-phosphate)-DNA + a 5'-end 5'-phospho-2'-deoxyribonucleoside-DNA + H(+). The catalysed reaction is a methylated nucleobase within DNA + 2-oxoglutarate + O2 = a nucleobase within DNA + formaldehyde + succinate + CO2. It catalyses the reaction an N(6)-methyl-2'-deoxyadenosine in DNA + 2-oxoglutarate + O2 = a 2'-deoxyadenosine in DNA + formaldehyde + succinate + CO2. It carries out the reaction an N(1)-methyladenosine in tRNA + 2-oxoglutarate + O2 = an adenosine in tRNA + formaldehyde + succinate + CO2. The enzyme catalyses 5-methylcytidine(34) in mitochondrial tRNA(Met) + 2 2-oxoglutarate + 2 O2 = 5-formylcytidine(34) in mitochondrial tRNA(Met) + 2 succinate + 2 CO2 + H2O. The catalysed reaction is an N(3)-methylcytidine in mRNA + 2-oxoglutarate + O2 = a cytidine in mRNA + formaldehyde + succinate + CO2. It catalyses the reaction N(1)-methyladenosine(58) in tRNA + 2-oxoglutarate + O2 = adenosine(58) in tRNA + formaldehyde + succinate + CO2. In terms of biological role, dioxygenase that acts on nucleic acids, such as DNA and tRNA. Requires molecular oxygen, alpha-ketoglutarate and iron. A number of activities have been described for this dioxygenase, but recent results suggest that it mainly acts on tRNAs and mediates their demethylation or oxidation depending on the context and subcellular compartment. Mainly acts as a tRNA demethylase by removing N(1)-methyladenine from various tRNAs, with a preference for N(1)-methyladenine at position 58 (m1A58) present on a stem loop structure of tRNAs. Acts as a regulator of translation initiation and elongation in response to glucose deprivation: regulates both translation initiation, by mediating demethylation of tRNA(Met), and translation elongation, N(1)-methyladenine-containing tRNAs being preferentially recruited to polysomes to promote translation elongation. In mitochondrion, specifically interacts with mt-tRNA(Met) and mediates oxidation of mt-tRNA(Met) methylated at cytosine(34) to form 5-formylcytosine (f(5)c) at this position. mt-tRNA(Met) containing the f(5)c modification at the wobble position enables recognition of the AUA codon in addition to the AUG codon, expanding codon recognition in mitochondrial translation. Specifically demethylates DNA methylated on the 6th position of adenine (N(6)-methyladenosine) DNA. N(6)-methyladenosine (m6A) DNA is present at some L1 elements in embryonic stem cells and probably promotes their silencing. Demethylates mRNAs containing N(3)-methylcytidine modification. Also able to repair alkylated single-stranded DNA by oxidative demethylation, but with low activity. Also has DNA lyase activity and introduces double-stranded breaks at abasic sites: cleaves both single-stranded DNA and double-stranded DNA at abasic sites, with the greatest activity towards double-stranded DNA with two abasic sites. DNA lyase activity does not require alpha-ketoglutarate and iron and leads to the formation of an irreversible covalent protein-DNA adduct with the 5' DNA product. DNA lyase activity is not required during base excision repair and class switch recombination of the immunoglobulin heavy chain during B lymphocyte activation. May play a role in placental trophoblast lineage differentiation. The sequence is that of Nucleic acid dioxygenase ALKBH1 from Homo sapiens (Human).